A 168-amino-acid polypeptide reads, in one-letter code: Microtubule-associated protein Jupiter (168 aa).

The span at 1–14 (MISNFDCTDNQASS) shows a compositional bias: polar residues. Positions 1–33 (MISNFDCTDNQASSKVLRPPGGGSSDIFGSEMP) are disordered. Phosphoserine is present on serine 24. Threonine 35 carries the post-translational modification Phosphothreonine. The span at 76-87 (RGQKTVDSHSRL) shows a compositional bias: basic and acidic residues. Disordered stretches follow at residues 76–106 (RGQKTVDSHSRLFGEPTRPITPGKNHMKSSI) and 124–168 (NGHY…GAGK). Phosphothreonine is present on residues threonine 92 and threonine 96. Serine 105, serine 133, and serine 144 each carry phosphoserine. Low complexity predominate over residues 131–144 (SGSVSSASSSVSSS). Over residues 145–155 (TENLKMNSGSR) the composition is skewed to polar residues.

It belongs to the MAP Jupiter family.

The protein resides in the nucleus. Its subcellular location is the cytoplasm. The protein localises to the cytoskeleton. It is found in the spindle. Functionally, binds to all microtubule populations. In Drosophila simulans (Fruit fly), this protein is Microtubule-associated protein Jupiter.